A 349-amino-acid chain; its full sequence is GTPase Obg (349 aa).

In terms of domain architecture, Obg spans 1-159 (MKFLDEAKVY…RWIWLRLKLI (159 aa)). The region spanning 160–327 (ADAGLVGLPN…ALRALVEVIG (168 aa)) is the OBG-type G domain. GTP is bound by residues 166 to 173 (GLPNAGKS), 191 to 195 (FTTLH), 212 to 215 (DIPG), 279 to 282 (NKID), and 308 to 310 (SGV). Residues Ser173 and Thr193 each coordinate Mg(2+).

This sequence belongs to the TRAFAC class OBG-HflX-like GTPase superfamily. OBG GTPase family. As to quaternary structure, monomer. Requires Mg(2+) as cofactor.

The protein resides in the cytoplasm. Its function is as follows. An essential GTPase which binds GTP, GDP and possibly (p)ppGpp with moderate affinity, with high nucleotide exchange rates and a fairly low GTP hydrolysis rate. Plays a role in control of the cell cycle, stress response, ribosome biogenesis and in those bacteria that undergo differentiation, in morphogenesis control. The sequence is that of GTPase Obg from Rhodopseudomonas palustris (strain BisB18).